The following is a 131-amino-acid chain: Small ribosomal subunit protein uS8 (131 aa).

The protein belongs to the universal ribosomal protein uS8 family. Part of the 30S ribosomal subunit. Contacts proteins S5 and S12.

Functionally, one of the primary rRNA binding proteins, it binds directly to 16S rRNA central domain where it helps coordinate assembly of the platform of the 30S subunit. The chain is Small ribosomal subunit protein uS8 from Nautilia profundicola (strain ATCC BAA-1463 / DSM 18972 / AmH).